The chain runs to 154 residues: Crossover junction endodeoxyribonuclease RuvC (154 aa).

Catalysis depends on residues Asp7, Glu67, and Asp139. Residues Asp7, Glu67, and Asp139 each contribute to the Mg(2+) site.

This sequence belongs to the RuvC family. Homodimer which binds Holliday junction (HJ) DNA. The HJ becomes 2-fold symmetrical on binding to RuvC with unstacked arms; it has a different conformation from HJ DNA in complex with RuvA. In the full resolvosome a probable DNA-RuvA(4)-RuvB(12)-RuvC(2) complex forms which resolves the HJ. It depends on Mg(2+) as a cofactor.

It localises to the cytoplasm. It carries out the reaction Endonucleolytic cleavage at a junction such as a reciprocal single-stranded crossover between two homologous DNA duplexes (Holliday junction).. Functionally, the RuvA-RuvB-RuvC complex processes Holliday junction (HJ) DNA during genetic recombination and DNA repair. Endonuclease that resolves HJ intermediates. Cleaves cruciform DNA by making single-stranded nicks across the HJ at symmetrical positions within the homologous arms, yielding a 5'-phosphate and a 3'-hydroxyl group; requires a central core of homology in the junction. The consensus cleavage sequence is 5'-(A/T)TT(C/G)-3'. Cleavage occurs on the 3'-side of the TT dinucleotide at the point of strand exchange. HJ branch migration catalyzed by RuvA-RuvB allows RuvC to scan DNA until it finds its consensus sequence, where it cleaves and resolves the cruciform DNA. The sequence is that of Crossover junction endodeoxyribonuclease RuvC from Synechococcus sp. (strain CC9902).